Here is a 246-residue protein sequence, read N- to C-terminus: tRNA (guanine-N(1)-)-methyltransferase (246 aa).

S-adenosyl-L-methionine contacts are provided by residues G112 and 131–136 (IGDYVL).

It belongs to the RNA methyltransferase TrmD family. Homodimer.

It localises to the cytoplasm. It carries out the reaction guanosine(37) in tRNA + S-adenosyl-L-methionine = N(1)-methylguanosine(37) in tRNA + S-adenosyl-L-homocysteine + H(+). In terms of biological role, specifically methylates guanosine-37 in various tRNAs. This is tRNA (guanine-N(1)-)-methyltransferase from Fervidobacterium nodosum (strain ATCC 35602 / DSM 5306 / Rt17-B1).